A 196-amino-acid chain; its full sequence is MPIGVPKVPFQIPGEEDASWVDVYNRLYRERLLFLGQEVDSDISNQLIGLMVYLSIEDDTKEIYLFINSPGGWVIPGVAIYDTMQFVRPEVHTICMGLAASMGSFLLVGGEITKRLAFPHARVMIHQPASYFFGAQTGEFILEAEELLKLRETLTRVYVQRTGKPLWVISEDMERDVFMSAKDAQAYGIVDLVAVE.

Ser-101 functions as the Nucleophile in the catalytic mechanism. Residue His-126 is part of the active site.

It belongs to the peptidase S14 family. In terms of assembly, component of the chloroplastic Clp protease core complex.

Its subcellular location is the plastid. The enzyme catalyses Hydrolysis of proteins to small peptides in the presence of ATP and magnesium. alpha-casein is the usual test substrate. In the absence of ATP, only oligopeptides shorter than five residues are hydrolyzed (such as succinyl-Leu-Tyr-|-NHMec, and Leu-Tyr-Leu-|-Tyr-Trp, in which cleavage of the -Tyr-|-Leu- and -Tyr-|-Trp bonds also occurs).. In terms of biological role, cleaves peptides in various proteins in a process that requires ATP hydrolysis. Has a chymotrypsin-like activity. Plays a major role in the degradation of misfolded proteins. In Epifagus virginiana (Beechdrops), this protein is ATP-dependent Clp protease proteolytic subunit (clpP).